We begin with the raw amino-acid sequence, 56 residues long: Ovomucoid (56 aa).

The Kazal-like domain maps to 6-56 (VDCSDHPKPACLQEQKPICGSDNKTYDNKCSFCNAVVDSNGTLTLSHFGKC). 3 disulfides stabilise this stretch: cysteine 8-cysteine 38, cysteine 16-cysteine 35, and cysteine 24-cysteine 56. Asparagine 45 carries an N-linked (GlcNAc...) asparagine glycan.

It localises to the secreted. This Ortalis vetula (Plain chachalaca) protein is Ovomucoid.